The sequence spans 111 residues: UPF0060 membrane protein xcc-b100_1273 (111 aa).

Transmembrane regions (helical) follow at residues 8–28 (LLLF…PYLW), 34–54 (SVWL…LLTL), 62–82 (VYAA…WWVD), and 91–111 (LLGA…PRSG).

Belongs to the UPF0060 family.

It localises to the cell inner membrane. The polypeptide is UPF0060 membrane protein xcc-b100_1273 (Xanthomonas campestris pv. campestris (strain B100)).